A 633-amino-acid polypeptide reads, in one-letter code: NADPH-dependent diflavin oxidoreductase 1 (633 aa).

The 145-residue stretch at Cys-5 to Ile-149 folds into the Flavodoxin-like domain. FMN is bound by residues Thr-11–Ser-16, Ser-58–Gly-61, and Asp-131. Positions Thr-196–Pro-442 constitute an FAD-binding FR-type domain. Residues Arg-377 to Ser-380 and Gly-412 to Ser-415 contribute to the FAD site. NADP(+)-binding positions include Thr-456, Ser-520–Arg-521, Lys-528–Gln-532, and Asp-565. A disordered region spans residues Lys-580–Asn-610. A compositionally biased stretch (low complexity) spans Asn-581–Asn-604. Residue Trp-633 participates in FAD binding.

It belongs to the NADPH-dependent diflavin oxidoreductase NDOR1 family. In the N-terminal section; belongs to the flavodoxin family. The protein in the C-terminal section; belongs to the flavoprotein pyridine nucleotide cytochrome reductase family. It depends on FAD as a cofactor. FMN serves as cofactor.

The protein resides in the cytoplasm. It carries out the reaction 2 oxidized [2Fe-2S]-[protein] + NADPH = 2 reduced [2Fe-2S]-[protein] + NADP(+) + H(+). Its function is as follows. NADPH-dependent reductase which is a central component of the cytosolic iron-sulfur (Fe-S) protein assembly (CIA) machinery. Transfers electrons from NADPH via its FAD and FMN prosthetic groups to the [2Fe-2S] cluster of the anamorsin/DRE2 homolog, another key component of the CIA machinery. In turn, this reduced cluster provides electrons for assembly of cytosolic iron-sulfur cluster proteins. This chain is NADPH-dependent diflavin oxidoreductase 1 (redC), found in Dictyostelium discoideum (Social amoeba).